A 122-amino-acid chain; its full sequence is Large ribosomal subunit protein uL14 (122 aa).

Belongs to the universal ribosomal protein uL14 family. As to quaternary structure, part of the 50S ribosomal subunit. Forms a cluster with proteins L3 and L19. In the 70S ribosome, L14 and L19 interact and together make contacts with the 16S rRNA in bridges B5 and B8.

Functionally, binds to 23S rRNA. Forms part of two intersubunit bridges in the 70S ribosome. The polypeptide is Large ribosomal subunit protein uL14 (Streptococcus thermophilus (strain CNRZ 1066)).